Reading from the N-terminus, the 198-residue chain is Recombination protein RecR (198 aa).

The C4-type zinc-finger motif lies at 56 to 71; sequence CKICHSLTENEICDIC. Residues 79–174 enclose the Toprim domain; that stretch reads HLLCVVESPA…HMTRIAQGVP (96 aa).

This sequence belongs to the RecR family.

Functionally, may play a role in DNA repair. It seems to be involved in an RecBC-independent recombinational process of DNA repair. It may act with RecF and RecO. The chain is Recombination protein RecR from Acinetobacter baylyi (strain ATCC 33305 / BD413 / ADP1).